Consider the following 161-residue polypeptide: Leucine-rich colipase-like protein 1 (161 aa).

The N-terminal stretch at 1 to 25 (MSVSVWPPLLLLLLLLLLWAVPTFQ) is a signal peptide.

The protein is Leucine-rich colipase-like protein 1 (Lrcol1) of Mus musculus (Mouse).